We begin with the raw amino-acid sequence, 239 residues long: Fatty acid metabolism regulator protein (239 aa).

Residues 6–74 (QSPAGFAEEY…HGKPTKVNNF (69 aa)) enclose the HTH gntR-type domain. A DNA-binding region (H-T-H motif) is located at residues 34–53 (ERELSELIGVTRTTLREVLQ).

In terms of assembly, homodimer.

It is found in the cytoplasm. Functionally, multifunctional regulator of fatty acid metabolism. This is Fatty acid metabolism regulator protein from Klebsiella pneumoniae subsp. pneumoniae (strain ATCC 700721 / MGH 78578).